A 297-amino-acid chain; its full sequence is uncharacterized protein (297 aa).

3 disordered regions span residues 1 to 20 (MDTLPPATSEESFEIPNADV), 39 to 100 (IEKD…ENLG), and 174 to 297 (VQKA…NEDQ). In terms of domain architecture, RRM spans 101 to 179 (NDLFVSGIAS…RVLNVQKAKR (79 aa)). Phosphoserine is present on Ser-184. 2 stretches are compositionally biased toward basic and acidic residues: residues 209–223 (GGYRRNNYRDRDSNR) and 233–253 (PQREHSPGNYRKERYNVDSRP). Over residues 254–263 (RRERHFHGRS) the composition is skewed to basic residues. The segment covering 287–297 (SHSSVPPNEDQ) has biased composition (polar residues).

Its subcellular location is the nucleus. This is an uncharacterized protein from Schizosaccharomyces pombe (strain 972 / ATCC 24843) (Fission yeast).